The sequence spans 483 residues: GTPase Der (483 aa).

2 EngA-type G domains span residues Phe3–Arg167 and Leu212–Asn387. GTP is bound by residues Gly9–Ser16, Asp56–Leu60, Asn119–Glu122, Gly218–Ser225, Asp265–Met269, and Asn330–Asp333. Residues Arg388–Asp472 enclose the KH-like domain.

This sequence belongs to the TRAFAC class TrmE-Era-EngA-EngB-Septin-like GTPase superfamily. EngA (Der) GTPase family. In terms of assembly, associates with the 50S ribosomal subunit.

In terms of biological role, GTPase that plays an essential role in the late steps of ribosome biogenesis. This chain is GTPase Der, found in Brucella suis (strain ATCC 23445 / NCTC 10510).